We begin with the raw amino-acid sequence, 263 residues long: Putative inactive caspase B (263 aa).

The propeptide at 1 to 8 is removed in mature form by cps-1 or ced-3; it reads MMCEDASD.

It belongs to the peptidase C14A family. Interacts with ced-3 (via large subunit p17 or small subunit p13); the interaction inhibits ced-3 autoactivation. In terms of processing, cleavage by csp-1 isoform b or ced-3 removes the propeptide and generates subunit p31 in vitro. An additional cleavage at Asp-149 generates the 2 subunits p17 and p14 but this cleavage appears to be less efficient. In terms of tissue distribution, specifically expressed in the hermaphrodite germline.

It is found in the cytoplasm. Putative inactive caspase. In the germline, binds caspase ced-3 zymogen and prevents ced-3 autoactivation. Does not affect the caspase activity of mature ced-3 and ced-4-mediated mature ced-3 activation. Negatively regulates germline apoptosis by inhibiting autocleavage of caspase ced-3. Involved in fertility. In terms of biological role, putative inactive caspase. Dispensable for the inhibition of germline apoptosis. In Caenorhabditis elegans, this protein is Putative inactive caspase B.